We begin with the raw amino-acid sequence, 191 residues long: Small ribosomal subunit protein bS6 (191 aa).

Positions 168-191 are disordered; sequence KVNLTRKPTPNKSSENKQKVEKQA. Basic and acidic residues predominate over residues 181–191; the sequence is SENKQKVEKQA.

The protein belongs to the bacterial ribosomal protein bS6 family.

In terms of biological role, binds together with bS18 to 16S ribosomal RNA. The polypeptide is Small ribosomal subunit protein bS6 (Mycoplasmoides gallisepticum (strain R(low / passage 15 / clone 2)) (Mycoplasma gallisepticum)).